Consider the following 401-residue polypeptide: Tyrosine--tRNA ligase (401 aa).

Residues 42–51 (PTAPDLHLGH) carry the 'HIGH' region motif. The 'KMSKS' region signature appears at 226-230 (KMSKS). K229 contributes to the ATP binding site. In terms of domain architecture, S4 RNA-binding spans 336-397 (IALAQLLKQI…GKRRIAKLSI (62 aa)).

This sequence belongs to the class-I aminoacyl-tRNA synthetase family. TyrS type 2 subfamily. Homodimer.

It localises to the cytoplasm. It carries out the reaction tRNA(Tyr) + L-tyrosine + ATP = L-tyrosyl-tRNA(Tyr) + AMP + diphosphate + H(+). Functionally, catalyzes the attachment of tyrosine to tRNA(Tyr) in a two-step reaction: tyrosine is first activated by ATP to form Tyr-AMP and then transferred to the acceptor end of tRNA(Tyr). The polypeptide is Tyrosine--tRNA ligase (Legionella pneumophila (strain Paris)).